Consider the following 373-residue polypeptide: MSDNSKTRVVVGMSGGVDSSVTALLLKEQGYDVIGIFMKNWDDTDENGVCTATEDYKDVVAVADQIGIPYYSVNFEKEYWDRVFEYFLAEYRAGRTPNPDVMCNKEIKFKAFLDYAMTLGADYVATGHYARVARDEDGTVHMLRGVDNGKDQTYFLSQLSQEQLQKTMFPLGHLKKPEVRKLAEEAGLSTAKKKDSTGICFIGEKNFKNFLSNYLPAQPGRMMTVDGRDMGEHAGLMYYTIGQRGGLGIGGQHGGDNAPWFVVGKDLSKNILYVGQGFYHDSLMSTSLEASQVHFTREMPEEFTLECTAKFRYRQPDSKVTVHVKGDKAEVIFAEPQRAITPGQAVVFYDGEECLGGGLIDNAYRDGQVCQYI.

Residues 12–19 and M38 contribute to the ATP site; that span reads GMSGGVDS. Residues 98-100 form an interaction with target base in tRNA region; it reads NPD. C103 functions as the Nucleophile in the catalytic mechanism. A disulfide bond links C103 and C200. G127 provides a ligand contact to ATP. Residues 150-152 form an interaction with tRNA region; it reads KDQ. The Cysteine persulfide intermediate role is filled by C200. Residues 312–313 form an interaction with tRNA region; sequence RY.

The protein belongs to the MnmA/TRMU family.

It is found in the cytoplasm. It catalyses the reaction S-sulfanyl-L-cysteinyl-[protein] + uridine(34) in tRNA + AH2 + ATP = 2-thiouridine(34) in tRNA + L-cysteinyl-[protein] + A + AMP + diphosphate + H(+). Catalyzes the 2-thiolation of uridine at the wobble position (U34) of tRNA, leading to the formation of s(2)U34. The protein is tRNA-specific 2-thiouridylase MnmA of Streptococcus pneumoniae (strain ATCC BAA-255 / R6).